We begin with the raw amino-acid sequence, 92 residues long: FMRFamide-like neuropeptides 5 (92 aa).

Residues Met-1–Ala-41 constitute a propeptide that is removed on maturation. Phe-51 and Phe-61 each carry phenylalanine amide. The propeptide occupies Ser-64–Val-82. Phe-91 is subject to Phenylalanine amide.

It belongs to the FARP (FMRFamide related peptide) family. As to expression, each flp gene is expressed in a distinct set of neurons. Flp-5 is expressed in the ASE sensory neurons, the 14 and M4 cholinergic pharyngeal motoneurons, and the PVT and RMG neurons. It is weakly expressed in the PB and 12 neurons. Also expressed in pharyngeal muscle.

The protein localises to the secreted. Functionally, FMRFamides and FMRFamide-like peptides are neuropeptides. GAKFIRF-amide has an excitatory effect on dissected pharyngeal myogenic muscle system. The sequence is that of FMRFamide-like neuropeptides 5 from Caenorhabditis elegans.